Consider the following 103-residue polypeptide: Alkanal monooxygenase alpha chain (103 aa).

In terms of assembly, heterodimer of an alpha and a beta chain.

The catalysed reaction is a long-chain fatty aldehyde + FMNH2 + O2 = a long-chain fatty acid + hnu + FMN + H2O + 2 H(+). Light-emitting reaction in luminous bacteria. In Vibrio cholerae, this protein is Alkanal monooxygenase alpha chain (luxA).